The primary structure comprises 119 residues: Anamorsin homolog (119 aa).

Residues 33–119 (LKQATKGEDC…KVKLNLTDDI (87 aa)) form a disordered region. Residues Cys42, Cys49, Cys52, and Cys54 each coordinate [2Fe-2S] cluster. The segment at 42–54 (CTTRRRACKNCVC) is fe-S binding site A. [4Fe-4S] cluster contacts are provided by Cys81, Cys84, Cys92, and Cys95. Short sequence motifs (cx2C motif) lie at residues 81–84 (CGNC) and 92–95 (CANC). The segment at 81–95 (CGNCAKGDAFRCANC) is fe-S binding site B.

Belongs to the anamorsin family. In terms of assembly, monomer. The cofactor is [2Fe-2S] cluster. [4Fe-4S] cluster is required as a cofactor.

Its subcellular location is the cytoplasm. The protein resides in the mitochondrion intermembrane space. In terms of biological role, component of the cytosolic iron-sulfur (Fe-S) protein assembly (CIA) machinery. Required for the maturation of extramitochondrial Fe-S proteins. Part of an electron transfer chain functioning in an early step of cytosolic Fe-S biogenesis, facilitating the de novo assembly of a [4Fe-4S] cluster on the cytosolic Fe-S scaffold complex. Electrons are transferred from NADPH via a FAD- and FMN-containing diflavin oxidoreductase. Together with the diflavin oxidoreductase, also required for the assembly of the diferric tyrosyl radical cofactor of ribonucleotide reductase (RNR), probably by providing electrons for reduction during radical cofactor maturation in the catalytic small subunit. The chain is Anamorsin homolog from Leishmania braziliensis.